Here is a 677-residue protein sequence, read N- to C-terminus: Methionine--tRNA ligase (677 aa).

The 'HIGH' region signature appears at 15-25 (PYANGSIHLGH). Zn(2+) contacts are provided by cysteine 146, cysteine 149, cysteine 159, and cysteine 162. Residues 333–337 (KMSKS) carry the 'KMSKS' region motif. Lysine 336 provides a ligand contact to ATP. The region spanning 575–677 (DFAKVDLRVA…DGAKPGQQVK (103 aa)) is the tRNA-binding domain.

This sequence belongs to the class-I aminoacyl-tRNA synthetase family. MetG type 1 subfamily. As to quaternary structure, homodimer. Zn(2+) is required as a cofactor.

Its subcellular location is the cytoplasm. It carries out the reaction tRNA(Met) + L-methionine + ATP = L-methionyl-tRNA(Met) + AMP + diphosphate. Functionally, is required not only for elongation of protein synthesis but also for the initiation of all mRNA translation through initiator tRNA(fMet) aminoacylation. The protein is Methionine--tRNA ligase of Salmonella schwarzengrund (strain CVM19633).